The chain runs to 424 residues: MGNITKRGSKGRAADGPKALEGSTAATLHVQLCEAIMRQDCAALRALLRSHPVNQPMTILTSSTGCSLANSRLFLSQETLSFLPIHLAAKYRKAQSLLCLLEHGADPEARDTQGFTTLHLMLLNWPITSTTWTKPRNKIQTMLTDVQRNAVLCLRILCAHGAQVNARVDSGHRHCPLHLATIYGTHLVLSILAQNGAQVNAQNGSSMTPLHMAADILNKEMMQTLIAWGASVNCAVSSTGNTALKLAVSTASSKAGRLLAAGLGCIRLLLVHGAQVNARDHDGQAAIHEACFGGREVIINLLLEFEANVNILTRNGESPIHMYLQRGSNIRDTALLARLLFRSYPLRLTNNQGKLPAGILLPEFHLLRETLLKLSQKPLSLEDICKRNVRNIYGEKHKQLLKRLLPGKIWNSVYGYHDLAHLLK.

7 ANK repeats span residues 80–109 (LSFL…DPEA), 113–169 (QGFT…ARVD), 172–201 (HRHC…QVNA), 205–234 (SSMT…SVNC), 239–278 (TGNT…QVNA), 282–311 (DGQA…NVNI), and 315–348 (NGES…PLRL).

In Bos taurus (Bovine), this protein is Ankyrin repeat domain-containing protein 61 (ANKRD61).